We begin with the raw amino-acid sequence, 228 residues long: Ribosomal RNA small subunit methyltransferase G (228 aa).

Residues glycine 89, leucine 94, 140–141 (VE), and arginine 159 each bind S-adenosyl-L-methionine.

This sequence belongs to the methyltransferase superfamily. RNA methyltransferase RsmG family.

It localises to the cytoplasm. It carries out the reaction guanosine(527) in 16S rRNA + S-adenosyl-L-methionine = N(7)-methylguanosine(527) in 16S rRNA + S-adenosyl-L-homocysteine. Specifically methylates the N7 position of guanine in position 527 of 16S rRNA. This is Ribosomal RNA small subunit methyltransferase G from Burkholderia ambifaria (strain ATCC BAA-244 / DSM 16087 / CCUG 44356 / LMG 19182 / AMMD) (Burkholderia cepacia (strain AMMD)).